Here is a 178-residue protein sequence, read N- to C-terminus: Cytidylate kinase (178 aa).

Position 7 to 15 (7 to 15 (GLPGTGTTT)) interacts with ATP.

Belongs to the cytidylate kinase family. Type 2 subfamily.

It localises to the cytoplasm. It carries out the reaction CMP + ATP = CDP + ADP. It catalyses the reaction dCMP + ATP = dCDP + ADP. The sequence is that of Cytidylate kinase from Methanococcus maripaludis (strain C7 / ATCC BAA-1331).